Here is a 177-residue protein sequence, read N- to C-terminus: Acireductone dioxygenase (177 aa).

His-99, His-101, Glu-105, and His-143 together coordinate Fe(2+). Ni(2+) contacts are provided by His-99, His-101, Glu-105, and His-143.

It belongs to the acireductone dioxygenase (ARD) family. As to quaternary structure, monomer. It depends on Fe(2+) as a cofactor. Requires Ni(2+) as cofactor.

The enzyme catalyses 1,2-dihydroxy-5-(methylsulfanyl)pent-1-en-3-one + O2 = 3-(methylsulfanyl)propanoate + CO + formate + 2 H(+). The catalysed reaction is 1,2-dihydroxy-5-(methylsulfanyl)pent-1-en-3-one + O2 = 4-methylsulfanyl-2-oxobutanoate + formate + 2 H(+). Its pathway is amino-acid biosynthesis; L-methionine biosynthesis via salvage pathway; L-methionine from S-methyl-5-thio-alpha-D-ribose 1-phosphate: step 5/6. Catalyzes 2 different reactions between oxygen and the acireductone 1,2-dihydroxy-3-keto-5-methylthiopentene (DHK-MTPene) depending upon the metal bound in the active site. Fe-containing acireductone dioxygenase (Fe-ARD) produces formate and 2-keto-4-methylthiobutyrate (KMTB), the alpha-ketoacid precursor of methionine in the methionine recycle pathway. Ni-containing acireductone dioxygenase (Ni-ARD) produces methylthiopropionate, carbon monoxide and formate, and does not lie on the methionine recycle pathway. The protein is Acireductone dioxygenase of Leptospira interrogans serogroup Icterohaemorrhagiae serovar copenhageni (strain Fiocruz L1-130).